We begin with the raw amino-acid sequence, 287 residues long: Myogenin (287 aa).

2 positions are modified to phosphoserine; by CaMK2G: serine 77 and serine 79. Residues 81–132 form the bHLH domain; that stretch reads DRRRAATLREKRRLKKVNEAFEALKRSTLLNPNQRLPKVEILRSAIQYIERL. Position 87 is a phosphothreonine; by CaMK2G (threonine 87).

As to quaternary structure, homodimer and heterodimer with E12; heterodimerization enhances MYOG DNA-binding and transcriptional activities. Interacts with SMARCA4/BRG1/BAF190A. Interacts (via C-terminal region) with SSRP1 and SUPT16H; the interaction is indicative of an interaction with the FACT complex. Interacts with CSRP3. In terms of processing, phosphorylated by CAMK2G on threonine and serine amino acids in a muscle activity-dependent manner. Phosphorylation of Thr-87 impairs both DNA-binding and trans-activation functions in contracting muscles. In terms of tissue distribution, expressed in muscle (at protein level).

It localises to the nucleus. Its function is as follows. Acts as a transcriptional activator that promotes transcription of muscle-specific target genes and plays a role in muscle differentiation, cell cycle exit and muscle atrophy. Essential for the development of functional embryonic skeletal fiber muscle differentiation. However is dispensable for postnatal skeletal muscle growth; phosphorylation by CAMK2G inhibits its transcriptional activity in respons to muscle activity. Required for the recruitment of the FACT complex to muscle-specific promoter regions, thus promoting gene expression initiation. During terminal myoblast differentiation, plays a role as a strong activator of transcription at loci with an open chromatin structure previously initiated by MYOD1. Together with MYF5 and MYOD1, co-occupies muscle-specific gene promoter core regions during myogenesis. Also cooperates with myocyte-specific enhancer factor MEF2D and BRG1-dependent recruitment of SWI/SNF chromatin-remodeling enzymes to alter chromatin structure at myogenic late gene promoters. Facilitates cell cycle exit during terminal muscle differentiation through the up-regulation of miR-20a expression, which in turn represses genes involved in cell cycle progression. Binds to the E-box containing (E1) promoter region of the miR-20a gene. Also plays a role in preventing reversal of muscle cell differentiation. Contributes to the atrophy-related gene expression in adult denervated muscles. Induces fibroblasts to differentiate into myoblasts. In Rattus norvegicus (Rat), this protein is Myogenin (Myog).